Reading from the N-terminus, the 1079-residue chain is MSRPNTRNKSKRPRADDCESPSAVFKKIHSTGAITKGDIKQLYMVWKPVCHGCHGNSKDSPNCFCGLIPAANGVRKSGLWQRTNEIIRALGPNPSTDLRDSTETPAGLTNLGATCYANSILQCLYMNTSFRLGIFSLEPDILKMHPVLDQLARLFAQLHSSKMAFIDSAPFIKTLELDNGVQQDSHEFLTLFLSLLEGSLSHSKVPGARTIVQHLFRGSVSHVTRCSSCGRDSEASSKMEDFYELELNIKGLNNLEQSLDDYLSTEALDGENQYFCESCQKRVDATRCIKLRSLPPVVNFQLKRYVFLPKTTTKKKISSAFSFPGQLDMGKRLSNPSSSYTYGLSAILIHKGSAANSGHYVAHVKDESNGQWWEFDDEHVSKLGLHPFGEKPGKSSDKTDQKPQGSSTADSVTNDDNNSCHEAAFTSTMEEMFSSTDAYMLMYKRIAKDENGIESNNISSNNSLPHHFVDEIDERNTSYVKECEEYESKKDVHLAYITERRQEVKSVLTEAPATPEEDSYFWISTDWLRQWADNVNPPSPIITGVRVHSSIDNSPIQCEHGKVPASKVTSMKRLSAGAWHKLFSKYGGGPTLSSDDFCMECLKDGAKNSVSADVYRDRKASLRSIAEAALAGNNPDGPLYFVSRPWLTQWLRRKNVDIPSDADSGPTIALTCTHGNLLPEHASGAKRVTVPEDLWLFLYETSGMKIDDIVTFPSDSQPCGICSQQLSVVASVEDNLRAVKLKQRQSHEKLTSGKSLALHPGQKYYLVPSSWLSEWRAYITATGKNISSLPEPQSLEVTINSLICEKHSRLLQRPLDLVCKRGTITQKASNTDGLTMISESDWILFSEEWNVAHGKGLCAEIVFSKSSQDNLQSSEAVPILVEDLDQSTNDLSNDLGGREPYVRTDPEVCEECIGEKESCALVEKLNYQNEDIQVYLVRGKEAPKSIREASAAVPVPDRRTSKRSRRTTSGNSISLKVSGSTTVYQLKLMIWESLGIVKENQELHKGSVEIEDDFATLADKCIFPGDVLWVKDSEIYENRDIADEISEQKVVVQTEEGFRGTLLTSSASAQLCQDISFSD.

The segment covering 1–12 (MSRPNTRNKSKR) has biased composition (basic residues). The disordered stretch occupies residues 1 to 21 (MSRPNTRNKSKRPRADDCESP). The USP domain occupies 106 to 446 (AGLTNLGATC…DAYMLMYKRI (341 aa)). Cys-115 serves as the catalytic Nucleophile. The Proton acceptor role is filled by His-359. The tract at residues 384 to 419 (GLHPFGEKPGKSSDKTDQKPQGSSTADSVTNDDNNS) is disordered. Residues 388-401 (FGEKPGKSSDKTDQ) are compositionally biased toward basic and acidic residues. Polar residues predominate over residues 402–417 (KPQGSSTADSVTNDDN). 3 DUSP domains span residues 495 to 598 (AYIT…DDFC), 613 to 715 (DVYR…FPSD), and 738 to 862 (AVKL…AEIV). The interval 948-972 (EASAAVPVPDRRTSKRSRRTTSGNS) is disordered. The Ubiquitin-like domain maps to 961-1037 (SKRSRRTTSG…LWVKDSEIYE (77 aa)).

The protein belongs to the peptidase C19 family.

The protein localises to the nucleus. The enzyme catalyses Thiol-dependent hydrolysis of ester, thioester, amide, peptide and isopeptide bonds formed by the C-terminal Gly of ubiquitin (a 76-residue protein attached to proteins as an intracellular targeting signal).. Recognizes and hydrolyzes the peptide bond at the C-terminal Gly of ubiquitin. Involved in the processing of poly-ubiquitin precursors as well as that of ubiquitinated proteins. Deubiquitinates H2BK143ub1 of histone H2B. This is Ubiquitin carboxyl-terminal hydrolase 26 (UBP26) from Oryza sativa subsp. japonica (Rice).